The sequence spans 269 residues: Mitochondrial acidic protein mam33 (269 aa).

Belongs to the MAM33 family.

It is found in the cytoplasm. Its subcellular location is the mitochondrion matrix. This chain is Mitochondrial acidic protein mam33, found in Schizosaccharomyces pombe (strain 972 / ATCC 24843) (Fission yeast).